The chain runs to 101 residues: Urease subunit beta (101 aa).

It belongs to the urease beta subunit family. As to quaternary structure, heterotrimer of UreA (gamma), UreB (beta) and UreC (alpha) subunits. Three heterotrimers associate to form the active enzyme.

Its subcellular location is the cytoplasm. It carries out the reaction urea + 2 H2O + H(+) = hydrogencarbonate + 2 NH4(+). The protein operates within nitrogen metabolism; urea degradation; CO(2) and NH(3) from urea (urease route): step 1/1. This chain is Urease subunit beta, found in Saccharophagus degradans (strain 2-40 / ATCC 43961 / DSM 17024).